A 501-amino-acid polypeptide reads, in one-letter code: Pyruvate kinase (501 aa).

Arg-50 provides a ligand contact to substrate. Positions 52, 54, 85, and 86 each coordinate K(+). Residue 52–55 coordinates ATP; sequence NFSH. ATP is bound by residues Arg-92 and Lys-178. Glu-243 contributes to the Mg(2+) binding site. 3 residues coordinate substrate: Gly-266, Asp-267, and Thr-299. Residue Asp-267 coordinates Mg(2+).

The protein belongs to the pyruvate kinase family. In terms of assembly, homotetramer. Requires Mg(2+) as cofactor. K(+) is required as a cofactor.

It carries out the reaction pyruvate + ATP = phosphoenolpyruvate + ADP + H(+). The protein operates within carbohydrate degradation; glycolysis; pyruvate from D-glyceraldehyde 3-phosphate: step 5/5. The sequence is that of Pyruvate kinase (PYK1) from Kluyveromyces lactis (strain ATCC 8585 / CBS 2359 / DSM 70799 / NBRC 1267 / NRRL Y-1140 / WM37) (Yeast).